Reading from the N-terminus, the 173-residue chain is Shikimate kinase 1 (173 aa).

14–19 serves as a coordination point for ATP; sequence GAGKST. Mg(2+) is bound at residue Ser18. Asp36, Arg60, and Gly82 together coordinate substrate. Arg120 contacts ATP. A substrate-binding site is contributed by Arg140. Gln157 is an ATP binding site.

The protein belongs to the shikimate kinase family. In terms of assembly, monomer. Mg(2+) is required as a cofactor.

It localises to the cytoplasm. It carries out the reaction shikimate + ATP = 3-phosphoshikimate + ADP + H(+). It functions in the pathway metabolic intermediate biosynthesis; chorismate biosynthesis; chorismate from D-erythrose 4-phosphate and phosphoenolpyruvate: step 5/7. Catalyzes the specific phosphorylation of the 3-hydroxyl group of shikimic acid using ATP as a cosubstrate. This chain is Shikimate kinase 1, found in Yersinia pseudotuberculosis serotype O:1b (strain IP 31758).